Reading from the N-terminus, the 239-residue chain is MRRAVVLFSGGLDSTASLYWALKHYDEVIMLTINYGSQEERVTNKVAEFFSRELNVPLKIVKIDFLHEFSKIAGSKLVEGNVPEVTARELEDFEKAKETARSVWIPARNFVLIGVAASLLDALGGGDIIVGFNKEEGETFPDNTKEFVDRINSALKYATMNEVRVVAPLIELDKKGIARLLKELNAKYEYSNSCYNPQGFTEDGKPIHCGRCESCVRRHRGLIEGIGEDKTVYLVTPKV.

8–18 provides a ligand contact to ATP; the sequence is FSGGLDSTASL. Zn(2+) is bound by residues C194, C209, C212, and C215.

The protein belongs to the QueC family.

The catalysed reaction is 7-carboxy-7-deazaguanine + NH4(+) + ATP = 7-cyano-7-deazaguanine + ADP + phosphate + H2O + H(+). Its pathway is purine metabolism; 7-cyano-7-deazaguanine biosynthesis. In terms of biological role, catalyzes the ATP-dependent conversion of 7-carboxy-7-deazaguanine (CDG) to 7-cyano-7-deazaguanine (preQ(0)). This is 7-cyano-7-deazaguanine synthase from Pyrococcus abyssi (strain GE5 / Orsay).